We begin with the raw amino-acid sequence, 333 residues long: tRNA N6-adenosine threonylcarbamoyltransferase (333 aa).

Residues His111 and His115 each contribute to the Fe cation site. Substrate-binding positions include 134 to 138 (LVSGG), Asp167, Gly180, and Asn272. Residue Asp300 participates in Fe cation binding.

Belongs to the KAE1 / TsaD family. Fe(2+) is required as a cofactor.

It localises to the cytoplasm. It catalyses the reaction L-threonylcarbamoyladenylate + adenosine(37) in tRNA = N(6)-L-threonylcarbamoyladenosine(37) in tRNA + AMP + H(+). Functionally, required for the formation of a threonylcarbamoyl group on adenosine at position 37 (t(6)A37) in tRNAs that read codons beginning with adenine. Is involved in the transfer of the threonylcarbamoyl moiety of threonylcarbamoyl-AMP (TC-AMP) to the N6 group of A37, together with TsaE and TsaB. TsaD likely plays a direct catalytic role in this reaction. This chain is tRNA N6-adenosine threonylcarbamoyltransferase, found in Legionella pneumophila (strain Corby).